A 307-amino-acid polypeptide reads, in one-letter code: Leucine-rich repeat-containing protein 25 (307 aa).

Positions methionine 1–serine 20 are cleaved as a signal peptide. At glutamine 21–alanine 168 the chain is on the extracellular side. N-linked (GlcNAc...) asparagine glycans are attached at residues asparagine 44 and asparagine 56. 2 LRR repeats span residues serine 63–glutamate 86 and glutamine 87–cysteine 110. Residues asparagine 95, asparagine 132, and asparagine 151 are each glycosylated (N-linked (GlcNAc...) asparagine). A helical membrane pass occupies residues isoleucine 169–leucine 189. Residues alanine 190 to arginine 307 are Cytoplasmic-facing. The interval threonine 205–valine 249 is disordered. Residues glycine 211 to glycine 226 show a composition bias toward low complexity. Positions proline 232–aspartate 243 are enriched in polar residues. A Phosphotyrosine modification is found at tyrosine 286.

Interacts with RIGI. Interacts with SQSTM1. Interacts with p65/RELA; this interaction promotes the degradation of RELA through autophagy.

It is found in the membrane. Its subcellular location is the cytoplasm. Functionally, plays a role in the inhibition of RLR-mediated type I interferon signaling pathway by targeting RIGI for autophagic degradation. Interacts specifically with ISG15-associated RIGI to promote interaction between RIGI and the autophagic cargo receptor p62/SQSTM1 to mediate RIGI degradation via selective autophagy. Plays also a role in the inhibition of NF-kappa-B signaling pathway and inflammatory response by promoting the degradation of p65/RELA. The protein is Leucine-rich repeat-containing protein 25 (LRRC25) of Bos taurus (Bovine).